Reading from the N-terminus, the 385-residue chain is GTPase Obg (385 aa).

One can recognise an Obg domain in the interval 1 to 159 (MKFVDEATIL…REIQLELMLL (159 aa)). The 174-residue stretch at 160–333 (ADVGMLGLPN…LCWDVMAFIN (174 aa)) folds into the OBG-type G domain. GTP is bound by residues 166 to 173 (GLPNAGKS), 191 to 195 (FTTLV), 213 to 216 (DIPG), 283 to 286 (NKAD), and 314 to 316 (SAA). Positions 173 and 193 each coordinate Mg(2+). Acidic residues predominate over residues 362-379 (QQEEAEETLDDDWDEDGV). The disordered stretch occupies residues 362-385 (QQEEAEETLDDDWDEDGVETIYQR).

This sequence belongs to the TRAFAC class OBG-HflX-like GTPase superfamily. OBG GTPase family. Monomer. The cofactor is Mg(2+).

Its subcellular location is the cytoplasm. In terms of biological role, an essential GTPase which binds GTP, GDP and possibly (p)ppGpp with moderate affinity, with high nucleotide exchange rates and a fairly low GTP hydrolysis rate. Plays a role in control of the cell cycle, stress response, ribosome biogenesis and in those bacteria that undergo differentiation, in morphogenesis control. The protein is GTPase Obg of Sodalis glossinidius (strain morsitans).